We begin with the raw amino-acid sequence, 141 residues long: Subtilase cytotoxin subunit B (141 aa).

The N-terminal stretch at 1–23 (MTIKRFFVCAGIMGCLSLNPAMA) is a signal peptide. Residues 33 to 35 (MFS) and Gln-59 each bind N-glycoloyl-alpha-neuraminate. Residues 89-94 (YFYTTG) are hydrophobic patch important for binding to SubA. N-glycoloyl-alpha-neuraminate is bound at residue Tyr-101.

In terms of assembly, forms a complex with SubA with the stoichiometry SubA1:SubB5 (called SubAB5). Each SubB subunit makes different contacts with the single SubA subunit. This subunit alone forms pentamers.

It localises to the secreted. The protein localises to the host cytoplasm. Its subcellular location is the host cytosol. The protein resides in the host endoplasmic reticulum lumen. Its function is as follows. Receptor-binding subunit of subtilase cytotoxin SubAB5. Required for receptor-binding and thus correct trafficking in the host cell. Has specificity for host glycans terminating in the sialic acid N-glycolyl-alpha-neuraminic acid (Neu5Gc); each subunit in the SubB pentamer binds one Neu5Gc. The protease subunit (SubA) cleaves host BiP/HSPA5, inducing the host endoplasmic reticulum stress response and eventual cell death. Culture supernatant of E.coli expressing both subA and subB are toxic for Vero cells (African green monkey kidney cell line), Chinese hamster ovary cells and Hct-8 cells (human colonic epithelial cell line); the subunits are not toxic individually. Purified SubAB5 is highly toxic, &lt;0.1 pg is able to kill at least 50% of 30'000 Vero cells in a microtiter plate assay after 3 days; no cytotoxicity is seen at 24 hours. Preabsorption with cells expressing a ganglioside GM2 mimic reduced cytotoxicity of SubAB5 by 93% in the Vero cytotoxicity assay. Intraperitoneal injection of 200 ng of purified SubAB5 kills mice; the higher the dose the faster the mice die. Animals injected with purified SubAB5 have microvascular thrombi in the brain and other organs, including the renal tubules and glomeruli. Mice fed E.coli cells expressing cloned SubAB5 experience drastic weight loss and appear ill and lethargic. SubB alone at 2.5 ug/ml causes vacuolation of Vero cells, which requires the V-type ATPase proton pump; treated cells die. Protein synthesis in Vero cells is transiently inhibited by SubAB5; both subunits are required for this effect. Inhibition of protein synthesis is prevented by brefeldin A; cells are arrested in the G1 phase. SubAB5 at 100 ng/ml induced caspase-dependent apoptosis in Vero cells through mitochondrial membrane damage. The chain is Subtilase cytotoxin subunit B from Escherichia coli.